Reading from the N-terminus, the 320-residue chain is Beta-ketoacyl-[acyl-carrier-protein] synthase III (320 aa).

Residues cysteine 114 and histidine 247 contribute to the active site. The tract at residues 248–252 (QANRR) is ACP-binding. Residue asparagine 277 is part of the active site.

The protein belongs to the thiolase-like superfamily. FabH family. As to quaternary structure, homodimer.

It is found in the cytoplasm. The enzyme catalyses malonyl-[ACP] + acetyl-CoA + H(+) = 3-oxobutanoyl-[ACP] + CO2 + CoA. The protein operates within lipid metabolism; fatty acid biosynthesis. Catalyzes the condensation reaction of fatty acid synthesis by the addition to an acyl acceptor of two carbons from malonyl-ACP. Catalyzes the first condensation reaction which initiates fatty acid synthesis and may therefore play a role in governing the total rate of fatty acid production. Possesses both acetoacetyl-ACP synthase and acetyl transacylase activities. Its substrate specificity determines the biosynthesis of branched-chain and/or straight-chain of fatty acids. The polypeptide is Beta-ketoacyl-[acyl-carrier-protein] synthase III (Neisseria meningitidis serogroup B (strain ATCC BAA-335 / MC58)).